The sequence spans 794 residues: Protocadherin beta-6 (794 aa).

An N-terminal signal peptide occupies residues 1–27 (MMQTKVQNKKRQVAFFILLMLWGEVGS). The Extracellular segment spans residues 28 to 688 (ESIQYSVLEE…AQADLLTVYL (661 aa)). 5 Cadherin domains span residues 34–132 (VLEE…APEF), 137–241 (MLLK…VPEF), 246–345 (YEAQ…APEL), 350–449 (FISP…APAF), and 454–559 (YTLF…SPFV). N-linked (GlcNAc...) asparagine glycosylation occurs at N46. A disulfide bond links C95 and C101. N183 carries an N-linked (GlcNAc...) asparagine glycan. The N-linked (GlcNAc...) asparagine glycan is linked to N416. N565 is a glycosylation site (N-linked (GlcNAc...) asparagine). Residues 566–669 (GSAPCTELVP…LVDGFSQPYL (104 aa)) enclose the Cadherin 6 domain. The chain crosses the membrane as a helical span at residues 689 to 709 (VVALASVSSLFLFSVLLFVAV). Residues 710–794 (RLCRRSRAAS…PTSRNSFPFS (85 aa)) are Cytoplasmic-facing. A disordered region spans residues 773–794 (PPQGTEREMEETPTSRNSFPFS). The segment covering 784–794 (TPTSRNSFPFS) has biased composition (polar residues).

In terms of assembly, forms homodimers in trans (molecules expressed by two different cells). Forms promiscuous heterodimers in cis (at the plasma membrane of the same cell) with other protocadherins.

It localises to the cell membrane. Its function is as follows. Calcium-dependent cell-adhesion protein involved in cells self-recognition and non-self discrimination. Thereby, it is involved in the establishment and maintenance of specific neuronal connections in the brain. In Pan troglodytes (Chimpanzee), this protein is Protocadherin beta-6.